We begin with the raw amino-acid sequence, 106 residues long: UPF0145 protein PFL_3418 (106 aa).

Belongs to the UPF0145 family.

The protein is UPF0145 protein PFL_3418 of Pseudomonas fluorescens (strain ATCC BAA-477 / NRRL B-23932 / Pf-5).